Consider the following 107-residue polypeptide: UPF0145 protein BH1111 (107 aa).

This sequence belongs to the UPF0145 family.

The polypeptide is UPF0145 protein BH1111 (Halalkalibacterium halodurans (strain ATCC BAA-125 / DSM 18197 / FERM 7344 / JCM 9153 / C-125) (Bacillus halodurans)).